A 448-amino-acid chain; its full sequence is ATP-dependent protease ATPase subunit HslU (448 aa).

Residues isoleucine 18, 60–65 (GVGKTE), aspartate 261, glutamate 326, and arginine 398 contribute to the ATP site.

This sequence belongs to the ClpX chaperone family. HslU subfamily. In terms of assembly, a double ring-shaped homohexamer of HslV is capped on each side by a ring-shaped HslU homohexamer. The assembly of the HslU/HslV complex is dependent on binding of ATP.

The protein localises to the cytoplasm. Its function is as follows. ATPase subunit of a proteasome-like degradation complex; this subunit has chaperone activity. The binding of ATP and its subsequent hydrolysis by HslU are essential for unfolding of protein substrates subsequently hydrolyzed by HslV. HslU recognizes the N-terminal part of its protein substrates and unfolds these before they are guided to HslV for hydrolysis. The protein is ATP-dependent protease ATPase subunit HslU of Paraburkholderia xenovorans (strain LB400).